We begin with the raw amino-acid sequence, 250 residues long: Probable transcriptional regulatory protein SAV_6832 (250 aa).

The protein belongs to the TACO1 family.

It localises to the cytoplasm. This chain is Probable transcriptional regulatory protein SAV_6832, found in Streptomyces avermitilis (strain ATCC 31267 / DSM 46492 / JCM 5070 / NBRC 14893 / NCIMB 12804 / NRRL 8165 / MA-4680).